The sequence spans 119 residues: Large ribosomal subunit protein uL18 (119 aa).

Belongs to the universal ribosomal protein uL18 family. In terms of assembly, part of the 50S ribosomal subunit; part of the 5S rRNA/L5/L18/L25 subcomplex. Contacts the 5S and 23S rRNAs.

Its function is as follows. This is one of the proteins that bind and probably mediate the attachment of the 5S RNA into the large ribosomal subunit, where it forms part of the central protuberance. The protein is Large ribosomal subunit protein uL18 of Xylella fastidiosa (strain 9a5c).